The primary structure comprises 148 residues: Sec-independent protein translocase protein TatB (148 aa).

The helical transmembrane segment at 2–22 threads the bilayer; the sequence is FNDIGPLELVTLVVLAVLVFG. Basic and acidic residues-rich tracts occupy residues 100 to 110 and 128 to 148; these read VTDAVHGRESE and MTKK…ADAT. The disordered stretch occupies residues 100-148; sequence VTDAVHGRESETSASSSSANGSAGGTVDMTKKREQLEADERPPFDADAT.

Belongs to the TatB family. In terms of assembly, the Tat system comprises two distinct complexes: a TatABC complex, containing multiple copies of TatA, TatB and TatC subunits, and a separate TatA complex, containing only TatA subunits. Substrates initially bind to the TatABC complex, which probably triggers association of the separate TatA complex to form the active translocon.

The protein localises to the cell membrane. In terms of biological role, part of the twin-arginine translocation (Tat) system that transports large folded proteins containing a characteristic twin-arginine motif in their signal peptide across membranes. Together with TatC, TatB is part of a receptor directly interacting with Tat signal peptides. TatB may form an oligomeric binding site that transiently accommodates folded Tat precursor proteins before their translocation. In Streptomyces avermitilis (strain ATCC 31267 / DSM 46492 / JCM 5070 / NBRC 14893 / NCIMB 12804 / NRRL 8165 / MA-4680), this protein is Sec-independent protein translocase protein TatB.